Consider the following 921-residue polypeptide: Protein translocase subunit SecA (921 aa).

ATP is bound by residues Gln-86, 104 to 108 (GEGKT), and Asp-497. A compositionally biased stretch (low complexity) spans 829–838 (QQAPQQQPQQ). The tract at residues 829–921 (QQAPQQQPQQ…CHGAIETQKA (93 aa)) is disordered. Residues 839–855 (VAPPPRPQPPQPAPQPP) show a composition bias toward pro residues. Zn(2+)-binding residues include Cys-901, Cys-903, Cys-912, and His-913.

It belongs to the SecA family. Monomer and homodimer. Part of the essential Sec protein translocation apparatus which comprises SecA, SecYEG and auxiliary proteins SecDF-YajC and YidC. The cofactor is Zn(2+).

It localises to the cell inner membrane. The protein resides in the cytoplasm. The enzyme catalyses ATP + H2O + cellular proteinSide 1 = ADP + phosphate + cellular proteinSide 2.. Its function is as follows. Part of the Sec protein translocase complex. Interacts with the SecYEG preprotein conducting channel. Has a central role in coupling the hydrolysis of ATP to the transfer of proteins into and across the cell membrane, serving both as a receptor for the preprotein-SecB complex and as an ATP-driven molecular motor driving the stepwise translocation of polypeptide chains across the membrane. The protein is Protein translocase subunit SecA of Hyphomonas neptunium (strain ATCC 15444).